The sequence spans 4318 residues: Cytoplasmic dynein 2 heavy chain 1 (4318 aa).

The tract at residues 1-1658 is stem; it reads MPAEDARKEY…IMRMVDAEFQ (1658 aa). An ATP-binding site is contributed by 147 to 154; that stretch reads LKSLVRKQ. 2 coiled-coil regions span residues 1328–1354 and 1402–1431; these read DKAT…QRKW and LRTT…RSIL. AAA stretches follow at residues 1659-1883, 1951-2171, 2261-2515, and 2623-2871; these read YTYE…VLRG, DAIR…RQGD, ASDF…WVLG, and TFAR…SSSV. Residue 1697–1704 participates in ATP binding; it reads GPAGTGKT. Positions 1959–1986 form a coiled coil; that stretch reads EHNLVVMETQVKKALELYEQLRQRMGVV. ATP-binding positions include 1989–1996, 2301–2308, and 2661–2668; these read GPSGSGKS, GPDGCGKG, and GRSGVGRR. The interval 2888–3176 is stalk; the sequence is DVYRRKKQGV…YELEKEQETI (289 aa). Coiled coils occupy residues 2908–2989 and 3423–3480; these read VAKL…AEIE and QHEK…KTKE. AAA stretches follow at residues 3251-3487 and 3699-3914; these read LSTE…TITQ and MTFF…IIDR.

The protein belongs to the dynein heavy chain family. As to quaternary structure, the cytoplasmic dynein complex 2 is probably composed by a heavy chain DYH1B homodimer and a number of light intermediate chains.

The protein localises to the cytoplasm. The protein resides in the cytoskeleton. It is found in the cilium axoneme. It localises to the cell membrane. In terms of biological role, may function as a motor for intraflagellar retrograde transport. Functions in cilia biogenesis. In Tripneustes gratilla (Hawaian sea urchin), this protein is Cytoplasmic dynein 2 heavy chain 1 (DYH1B).